Reading from the N-terminus, the 500-residue chain is Tektin-like protein 1 (500 aa).

Residues 198–229 (MLTWEKEELKSMKRKMEADMEKSEALLKTLAS) are a coiled coil. Residue Tyr372 is modified to Phosphotyrosine. Residues 420–444 (DKLQRHISHVEKNLDELLSMRKKLT) adopt a coiled-coil conformation.

As to quaternary structure, microtubule inner protein component of sperm flagellar doublet microtubules.

The protein localises to the cytoplasm. Its subcellular location is the cytoskeleton. It localises to the flagellum axoneme. Microtubule inner protein (MIP) part of the dynein-decorated doublet microtubules (DMTs) in sperm flagellar axoneme, which is required for motile flagellum beating. Forms an extensive interaction network cross-linking the lumen of axonemal doublet microtubules. The sequence is that of Tektin-like protein 1 from Bos taurus (Bovine).